We begin with the raw amino-acid sequence, 396 residues long: Small ribosomal subunit protein uS9m (396 aa).

Position 287 is an N6-acetyllysine (Lys-287). A disordered region spans residues 374-396 (PRVRERKKPGQEGARRKFTWKKR).

The protein belongs to the universal ribosomal protein uS9 family. As to quaternary structure, component of the mitochondrial small ribosomal subunit (mt-SSU). Mature mammalian 55S mitochondrial ribosomes consist of a small (28S) and a large (39S) subunit. The 28S small subunit contains a 12S ribosomal RNA (12S mt-rRNA) and 30 different proteins. The 39S large subunit contains a 16S rRNA (16S mt-rRNA), a copy of mitochondrial valine transfer RNA (mt-tRNA(Val)), which plays an integral structural role, and 52 different proteins.

It localises to the mitochondrion. The protein is Small ribosomal subunit protein uS9m (MRPS9) of Homo sapiens (Human).